Consider the following 225-residue polypeptide: E3 ubiquitin-protein ligase ATL76 (225 aa).

Residues 59–79 form a helical membrane-spanning segment; sequence LMLLSVLICGIICCLGLHYII. The segment at 135 to 177 adopts an RING-type; atypical zinc-finger fold; the sequence is CVICLSDFVSGEQLRLLPKCNHGFHVRCIDKWLQHHLTCPKCR.

Belongs to the RING-type zinc finger family. ATL subfamily.

It localises to the membrane. It catalyses the reaction S-ubiquitinyl-[E2 ubiquitin-conjugating enzyme]-L-cysteine + [acceptor protein]-L-lysine = [E2 ubiquitin-conjugating enzyme]-L-cysteine + N(6)-ubiquitinyl-[acceptor protein]-L-lysine.. Its pathway is protein modification; protein ubiquitination. Its function is as follows. E3 ubiquitin-protein ligase able to catalyze polyubiquitination with ubiquitin-conjugating enzyme E2 UBC8 in vitro. The sequence is that of E3 ubiquitin-protein ligase ATL76 (ATL76) from Arabidopsis thaliana (Mouse-ear cress).